Reading from the N-terminus, the 178-residue chain is Bifunctional protein PyrR (178 aa).

The PRPP-binding signature appears at 99-111 (IILVDDVLFTGRT).

The protein belongs to the purine/pyrimidine phosphoribosyltransferase family. PyrR subfamily. In terms of assembly, homodimer and homohexamer; in equilibrium.

It carries out the reaction UMP + diphosphate = 5-phospho-alpha-D-ribose 1-diphosphate + uracil. Functionally, regulates transcriptional attenuation of the pyrimidine nucleotide (pyr) operon by binding in a uridine-dependent manner to specific sites on pyr mRNA. This disrupts an antiterminator hairpin in the RNA and favors formation of a downstream transcription terminator, leading to a reduced expression of downstream genes. Its function is as follows. Also displays a weak uracil phosphoribosyltransferase activity which is not physiologically significant. This chain is Bifunctional protein PyrR, found in Clostridium novyi (strain NT).